We begin with the raw amino-acid sequence, 652 residues long: Threonine--tRNA ligase (652 aa).

The TGS domain occupies 1–64 (MPDVIRITFP…HEDGELVIIT (64 aa)). The catalytic stretch occupies residues 245-542 (DHRKLGKELE…LIEEYKGAFP (298 aa)). 3 residues coordinate Zn(2+): C338, H389, and H519.

It belongs to the class-II aminoacyl-tRNA synthetase family. In terms of assembly, homodimer. Zn(2+) is required as a cofactor.

It localises to the cytoplasm. It catalyses the reaction tRNA(Thr) + L-threonine + ATP = L-threonyl-tRNA(Thr) + AMP + diphosphate + H(+). Catalyzes the attachment of threonine to tRNA(Thr) in a two-step reaction: L-threonine is first activated by ATP to form Thr-AMP and then transferred to the acceptor end of tRNA(Thr). Also edits incorrectly charged L-seryl-tRNA(Thr). The polypeptide is Threonine--tRNA ligase (Geobacillus kaustophilus (strain HTA426)).